The following is a 423-amino-acid chain: Histidine--tRNA ligase (423 aa).

Belongs to the class-II aminoacyl-tRNA synthetase family. In terms of assembly, homodimer.

It is found in the cytoplasm. The enzyme catalyses tRNA(His) + L-histidine + ATP = L-histidyl-tRNA(His) + AMP + diphosphate + H(+). The protein is Histidine--tRNA ligase of Haemophilus ducreyi (strain 35000HP / ATCC 700724).